The primary structure comprises 547 residues: CTP synthase (547 aa).

Residues 1–265 form an amidoligase domain region; that stretch reads MARFIFITGG…DQAVLDAFQI (265 aa). CTP is bound at residue Ser-13. Ser-13 is a binding site for UTP. ATP is bound by residues 14–19 and Asp-71; that span reads SLGKGL. The Mg(2+) site is built by Asp-71 and Glu-139. CTP-binding positions include 146–148, 186–191, and Lys-222; these read DIE and KTKPTQ. UTP is bound by residues 186-191 and Lys-222; that span reads KTKPTQ. The Glutamine amidotransferase type-1 domain occupies 291 to 546; it reads KIAIVGKYVQ…VRAAKESSRL (256 aa). Position 353 (Gly-353) interacts with L-glutamine. The active-site Nucleophile; for glutamine hydrolysis is the Cys-380. L-glutamine contacts are provided by residues 381 to 384, Glu-404, and Arg-474; that span reads LGMQ. Catalysis depends on residues His-519 and Glu-521.

The protein belongs to the CTP synthase family. As to quaternary structure, homotetramer.

The enzyme catalyses UTP + L-glutamine + ATP + H2O = CTP + L-glutamate + ADP + phosphate + 2 H(+). It catalyses the reaction L-glutamine + H2O = L-glutamate + NH4(+). It carries out the reaction UTP + NH4(+) + ATP = CTP + ADP + phosphate + 2 H(+). It participates in pyrimidine metabolism; CTP biosynthesis via de novo pathway; CTP from UDP: step 2/2. Allosterically activated by GTP, when glutamine is the substrate; GTP has no effect on the reaction when ammonia is the substrate. The allosteric effector GTP functions by stabilizing the protein conformation that binds the tetrahedral intermediate(s) formed during glutamine hydrolysis. Inhibited by the product CTP, via allosteric rather than competitive inhibition. Functionally, catalyzes the ATP-dependent amination of UTP to CTP with either L-glutamine or ammonia as the source of nitrogen. Regulates intracellular CTP levels through interactions with the four ribonucleotide triphosphates. This Ruegeria pomeroyi (strain ATCC 700808 / DSM 15171 / DSS-3) (Silicibacter pomeroyi) protein is CTP synthase.